A 141-amino-acid chain; its full sequence is Nucleoside diphosphate kinase (141 aa).

Residues Lys-11, Phe-59, Arg-87, Thr-93, Arg-104, and Asn-114 each coordinate ATP. The active-site Pros-phosphohistidine intermediate is His-117.

This sequence belongs to the NDK family. Homotetramer. Requires Mg(2+) as cofactor.

It localises to the cytoplasm. It catalyses the reaction a 2'-deoxyribonucleoside 5'-diphosphate + ATP = a 2'-deoxyribonucleoside 5'-triphosphate + ADP. The enzyme catalyses a ribonucleoside 5'-diphosphate + ATP = a ribonucleoside 5'-triphosphate + ADP. Its function is as follows. Major role in the synthesis of nucleoside triphosphates other than ATP. The ATP gamma phosphate is transferred to the NDP beta phosphate via a ping-pong mechanism, using a phosphorylated active-site intermediate. In Polaromonas sp. (strain JS666 / ATCC BAA-500), this protein is Nucleoside diphosphate kinase.